The sequence spans 210 residues: ATP-dependent Clp protease proteolytic subunit 1 (210 aa).

S106 functions as the Nucleophile in the catalytic mechanism. H131 is a catalytic residue.

It belongs to the peptidase S14 family. In terms of assembly, fourteen ClpP subunits assemble into 2 heptameric rings which stack back to back to give a disk-like structure with a central cavity, resembling the structure of eukaryotic proteasomes.

It is found in the cytoplasm. It catalyses the reaction Hydrolysis of proteins to small peptides in the presence of ATP and magnesium. alpha-casein is the usual test substrate. In the absence of ATP, only oligopeptides shorter than five residues are hydrolyzed (such as succinyl-Leu-Tyr-|-NHMec, and Leu-Tyr-Leu-|-Tyr-Trp, in which cleavage of the -Tyr-|-Leu- and -Tyr-|-Trp bonds also occurs).. Its function is as follows. Cleaves peptides in various proteins in a process that requires ATP hydrolysis. Has a chymotrypsin-like activity. Plays a major role in the degradation of misfolded proteins. The polypeptide is ATP-dependent Clp protease proteolytic subunit 1 (Chelativorans sp. (strain BNC1)).